The following is a 54-amino-acid chain: UPF0391 membrane protein Aave_3864 (54 aa).

Helical transmembrane passes span 5-25 (AVVF…GIAA) and 28-48 (VGIA…TFVL).

This sequence belongs to the UPF0391 family.

It localises to the cell membrane. The chain is UPF0391 membrane protein Aave_3864 from Paracidovorax citrulli (strain AAC00-1) (Acidovorax citrulli).